Here is a 180-residue protein sequence, read N- to C-terminus: Bifunctional protein PyrR (180 aa).

Positions 101 to 113 (VVLVDDVIFKGRT) match the PRPP-binding motif.

Belongs to the purine/pyrimidine phosphoribosyltransferase family. PyrR subfamily.

The enzyme catalyses UMP + diphosphate = 5-phospho-alpha-D-ribose 1-diphosphate + uracil. Functionally, regulates the transcription of the pyrimidine nucleotide (pyr) operon in response to exogenous pyrimidines. In terms of biological role, also displays a weak uracil phosphoribosyltransferase activity which is not physiologically significant. This chain is Bifunctional protein PyrR, found in Trichormus variabilis (strain ATCC 29413 / PCC 7937) (Anabaena variabilis).